Here is a 179-residue protein sequence, read N- to C-terminus: Large ribosomal subunit protein uL6 (179 aa).

It belongs to the universal ribosomal protein uL6 family. Part of the 50S ribosomal subunit.

In terms of biological role, this protein binds to the 23S rRNA, and is important in its secondary structure. It is located near the subunit interface in the base of the L7/L12 stalk, and near the tRNA binding site of the peptidyltransferase center. In Mycolicibacterium gilvum (strain PYR-GCK) (Mycobacterium gilvum (strain PYR-GCK)), this protein is Large ribosomal subunit protein uL6.